A 593-amino-acid chain; its full sequence is Multidrug resistance-like ATP-binding protein MdlB (593 aa).

Residues 1–25 (MRSFSQLWPTLKRLLAYGSPWRKPL) are Cytoplasmic-facing. In terms of domain architecture, ABC transmembrane type-1 spans 25–310 (LGIAVLMMWV…LTTQQAMLQQ (286 aa)). Residues 26 to 46 (GIAVLMMWVAAAAEVSGPLLI) form a helical membrane-spanning segment. Topologically, residues 47 to 62 (SYFIDNMVAKNNLPLK) are periplasmic. Residues 63–83 (VVAGLAAAYVGLQLFAAGLHY) form a helical membrane-spanning segment. The Cytoplasmic portion of the chain corresponds to 84–140 (AQSLLFNRAAVGVVQQLRTDVMDAALRQPLSEFDTQPVGQVISRVTNDTEVIRDLYV). Residues 141-161 (TVVATVLRSAALVGAMLVAMF) traverse the membrane as a helical segment. The Periplasmic segment spans residues 162–164 (SLD). Residues 165-185 (WRMALVAIMIFPVVLVVMVIY) form a helical membrane-spanning segment. Over 186–254 (QRYSTPIVRR…LRLDGFLLRP (69 aa)) the chain is Cytoplasmic. A helical membrane pass occupies residues 255-275 (LLSLFSSLILCGLLMLFGFSA). Residues 276 to 278 (SGT) are Periplasmic-facing. Residues 279–299 (IEVGVLYAFISYLGRLNEPLI) traverse the membrane as a helical segment. Over 300–593 (ELTTQQAMLQ…SVREEESLSA (294 aa)) the chain is Cytoplasmic. The region spanning 341-574 (IEVDNVSFAY…QGRYWQMYQL (234 aa)) is the ABC transporter domain. 374 to 381 (GHTGSGKS) is a binding site for ATP.

The protein belongs to the ABC transporter superfamily. Drug exporter-2 (TC 3.A.1.117) family.

Its subcellular location is the cell inner membrane. It catalyses the reaction ATP + H2O + xenobioticSide 1 = ADP + phosphate + xenobioticSide 2.. This is Multidrug resistance-like ATP-binding protein MdlB (mdlB) from Escherichia coli O6:H1 (strain CFT073 / ATCC 700928 / UPEC).